A 400-amino-acid chain; its full sequence is Elongation factor Tu 1 (400 aa).

One can recognise a tr-type G domain in the interval 10–209 (KPHVNIGTIG…AVDEYIPTPQ (200 aa)). A G1 region spans residues 19 to 26 (GHVDHGKT). 19-26 (GHVDHGKT) serves as a coordination point for GTP. Threonine 26 is a binding site for Mg(2+). Positions 60 to 64 (GITIN) are G2. Positions 81–84 (DCPG) are G3. GTP contacts are provided by residues 81–85 (DCPGH) and 136–139 (NKAD). The G4 stretch occupies residues 136 to 139 (NKAD). The segment at 174–176 (SAL) is G5.

The protein belongs to the TRAFAC class translation factor GTPase superfamily. Classic translation factor GTPase family. EF-Tu/EF-1A subfamily. In terms of assembly, monomer.

The protein resides in the cytoplasm. The enzyme catalyses GTP + H2O = GDP + phosphate + H(+). In terms of biological role, GTP hydrolase that promotes the GTP-dependent binding of aminoacyl-tRNA to the A-site of ribosomes during protein biosynthesis. In Pelotomaculum thermopropionicum (strain DSM 13744 / JCM 10971 / SI), this protein is Elongation factor Tu 1.